A 1369-amino-acid chain; its full sequence is DNA-directed RNA polymerase subunit beta' (1369 aa).

The segment at 1–26 is disordered; sequence MTSSSPKTRKSSTKSKAKRGSKSKKA. Basic residues predominate over residues 7–24; the sequence is KTRKSSTKSKAKRGSKSK. Positions 253, 320, 327, and 330 each coordinate Zn(2+). The interval 1294–1369 is disordered; sequence TVDMPSSPVA…LQEEGLLSDE (76 aa). The segment covering 1342-1351 has biased composition (acidic residues); it reads DDELSAEDQM. Low complexity predominate over residues 1357-1369; it reads LEGLQEEGLLSDE.

The protein belongs to the RNA polymerase beta' chain family. RpoC2 subfamily. In cyanobacteria the RNAP catalytic core is composed of 2 alpha, 1 beta, 1 beta', 1 gamma and 1 omega subunit. When a sigma factor is associated with the core the holoenzyme is formed, which can initiate transcription. Zn(2+) is required as a cofactor.

It catalyses the reaction RNA(n) + a ribonucleoside 5'-triphosphate = RNA(n+1) + diphosphate. DNA-dependent RNA polymerase catalyzes the transcription of DNA into RNA using the four ribonucleoside triphosphates as substrates. This Prochlorococcus marinus (strain NATL2A) protein is DNA-directed RNA polymerase subunit beta'.